A 246-amino-acid polypeptide reads, in one-letter code: Pyridoxine 5'-phosphate synthase (246 aa).

Asparagine 9 contributes to the 3-amino-2-oxopropyl phosphate binding site. 11-12 is a binding site for 1-deoxy-D-xylulose 5-phosphate; sequence DH. Arginine 20 contributes to the 3-amino-2-oxopropyl phosphate binding site. Histidine 45 (proton acceptor) is an active-site residue. 1-deoxy-D-xylulose 5-phosphate contacts are provided by arginine 47 and histidine 52. Residue glutamate 72 is the Proton acceptor of the active site. Threonine 102 contacts 1-deoxy-D-xylulose 5-phosphate. The active-site Proton donor is histidine 193. 3-amino-2-oxopropyl phosphate contacts are provided by residues glycine 194 and 215–216; that span reads GH.

Belongs to the PNP synthase family. Homooctamer; tetramer of dimers.

Its subcellular location is the cytoplasm. The enzyme catalyses 3-amino-2-oxopropyl phosphate + 1-deoxy-D-xylulose 5-phosphate = pyridoxine 5'-phosphate + phosphate + 2 H2O + H(+). It participates in cofactor biosynthesis; pyridoxine 5'-phosphate biosynthesis; pyridoxine 5'-phosphate from D-erythrose 4-phosphate: step 5/5. Functionally, catalyzes the complicated ring closure reaction between the two acyclic compounds 1-deoxy-D-xylulose-5-phosphate (DXP) and 3-amino-2-oxopropyl phosphate (1-amino-acetone-3-phosphate or AAP) to form pyridoxine 5'-phosphate (PNP) and inorganic phosphate. The sequence is that of Pyridoxine 5'-phosphate synthase from Colwellia psychrerythraea (strain 34H / ATCC BAA-681) (Vibrio psychroerythus).